The chain runs to 211 residues: Uracil phosphoribosyltransferase (211 aa).

5-phospho-alpha-D-ribose 1-diphosphate contacts are provided by residues arginine 79, arginine 104, and 131-139 (DPMLATGGS). Uracil-binding positions include isoleucine 196 and 201-203 (GDA). Aspartate 202 serves as a coordination point for 5-phospho-alpha-D-ribose 1-diphosphate.

This sequence belongs to the UPRTase family. Mg(2+) serves as cofactor.

The enzyme catalyses UMP + diphosphate = 5-phospho-alpha-D-ribose 1-diphosphate + uracil. It functions in the pathway pyrimidine metabolism; UMP biosynthesis via salvage pathway; UMP from uracil: step 1/1. Its activity is regulated as follows. Allosterically activated by GTP. Its function is as follows. Catalyzes the conversion of uracil and 5-phospho-alpha-D-ribose 1-diphosphate (PRPP) to UMP and diphosphate. The protein is Uracil phosphoribosyltransferase of Limosilactobacillus fermentum (strain NBRC 3956 / LMG 18251) (Lactobacillus fermentum).